The chain runs to 216 residues: Deoxyribose-phosphate aldolase (216 aa).

Aspartate 89 (proton donor/acceptor) is an active-site residue. The active-site Schiff-base intermediate with acetaldehyde is the lysine 153. Lysine 182 functions as the Proton donor/acceptor in the catalytic mechanism.

Belongs to the DeoC/FbaB aldolase family. DeoC type 1 subfamily.

Its subcellular location is the cytoplasm. The enzyme catalyses 2-deoxy-D-ribose 5-phosphate = D-glyceraldehyde 3-phosphate + acetaldehyde. It functions in the pathway carbohydrate degradation; 2-deoxy-D-ribose 1-phosphate degradation; D-glyceraldehyde 3-phosphate and acetaldehyde from 2-deoxy-alpha-D-ribose 1-phosphate: step 2/2. In terms of biological role, catalyzes a reversible aldol reaction between acetaldehyde and D-glyceraldehyde 3-phosphate to generate 2-deoxy-D-ribose 5-phosphate. This is Deoxyribose-phosphate aldolase from Treponema denticola (strain ATCC 35405 / DSM 14222 / CIP 103919 / JCM 8153 / KCTC 15104).